The primary structure comprises 574 residues: Proline--tRNA ligase (574 aa).

This sequence belongs to the class-II aminoacyl-tRNA synthetase family. ProS type 1 subfamily. In terms of assembly, homodimer.

Its subcellular location is the cytoplasm. It catalyses the reaction tRNA(Pro) + L-proline + ATP = L-prolyl-tRNA(Pro) + AMP + diphosphate. Catalyzes the attachment of proline to tRNA(Pro) in a two-step reaction: proline is first activated by ATP to form Pro-AMP and then transferred to the acceptor end of tRNA(Pro). As ProRS can inadvertently accommodate and process non-cognate amino acids such as alanine and cysteine, to avoid such errors it has two additional distinct editing activities against alanine. One activity is designated as 'pretransfer' editing and involves the tRNA(Pro)-independent hydrolysis of activated Ala-AMP. The other activity is designated 'posttransfer' editing and involves deacylation of mischarged Ala-tRNA(Pro). The misacylated Cys-tRNA(Pro) is not edited by ProRS. This chain is Proline--tRNA ligase, found in Nautilia profundicola (strain ATCC BAA-1463 / DSM 18972 / AmH).